Reading from the N-terminus, the 94-residue chain is Alpha-conotoxin Ms20.3 (94 aa).

A signal peptide spans 1-24 (MPKLAVVLLVLLILPLSYFDAAGG). The propeptide occupies 25 to 45 (QVVQGDRRGNGLARYLQRGDR). E49 is modified (4-carboxyglutamate). The residue at position 55 (P55) is a 4-hydroxyproline. 4 disulfides stabilise this stretch: C63/C72, C68/C80, C73/C90, and C78/C92.

The protein belongs to the conotoxin D superfamily. In terms of assembly, hetero-, homo- or pseudo-homodimer (identical sequence, different post-translational modifications). Homodimer of [carboxyGlu-49, hydroxyPro-55]Ms20.3, and heterodimer of [carboxyGlu-49, hydroxyPro-55]Ms20.3 and [carboxy'Glu-50', hydroxy'Pro-56']Ms20.5 may exist. Expressed by the venom duct.

The protein localises to the secreted. Its function is as follows. Alpha-D-conopeptides act on postsynaptic membranes, they bind to the nicotinic acetylcholine receptors (nAChR) and thus inhibit them. Through its two C-terminal domains, this homodimeric protein would bind to two nAChR allosteric sites, located outside the nAChR C-loop of the principal binding face and at the adjacent binding interface in a clockwise direction. This toxin specifically blocks mammalian neuronal nAChR of the alpha-7/CHRNA7 (IC(50)=0.12 nM), alpha-3-beta-2/CHRNA3-CHRNB2 (IC(50)=1.08 nM), and alpha-4-beta-2/CHRNA4-CHRNB2 (IC(50)=4.5 nM) subtypes. Has no effect on alpha-3-beta-4/CHRNA3-CHRNB4, alpha-4-beta-4/CHRNA4-CHRNB4 and alpha-1-beta-1-epsilon-delta/CHRNA1-CHRNB1-CHRNE-CHRND subtypes of nAChRs. The polypeptide is Alpha-conotoxin Ms20.3 (Conus mustelinus (Weasel cone)).